We begin with the raw amino-acid sequence, 425 residues long: Glutamate-1-semialdehyde 2,1-aminomutase (425 aa).

At Lys-265 the chain carries N6-(pyridoxal phosphate)lysine.

This sequence belongs to the class-III pyridoxal-phosphate-dependent aminotransferase family. HemL subfamily. Homodimer. It depends on pyridoxal 5'-phosphate as a cofactor.

The protein resides in the cytoplasm. It carries out the reaction (S)-4-amino-5-oxopentanoate = 5-aminolevulinate. It functions in the pathway porphyrin-containing compound metabolism; protoporphyrin-IX biosynthesis; 5-aminolevulinate from L-glutamyl-tRNA(Glu): step 2/2. The chain is Glutamate-1-semialdehyde 2,1-aminomutase from Psychromonas ingrahamii (strain DSM 17664 / CCUG 51855 / 37).